The primary structure comprises 60 residues: LICYSQMYNEIIKTCENGETTCYSKTWRDHRGTRLEKGCGCPPVKYDMIVKCCKTDRCGN.

Intrachain disulfides connect C3/C22, C15/C39, C41/C52, and C53/C58.

The protein belongs to the three-finger toxin family. Short-chain subfamily. Type I alpha-neurotoxin sub-subfamily. In terms of tissue distribution, expressed by the venom gland.

It localises to the secreted. Its function is as follows. Produces peripheral paralysis by blocking neuromuscular transmission at the postsynaptic site. Binds to and inhibits the endogenous nicotinic acetylcholine receptors (nAChR) in human rhabdomyosarcoma TE 671 cell line with an IC(50) of 346 mM. This neurotoxin is lethal to mice by intraperitoneal injection and to zebrafish by injection at the back of the dorsolateral region. This is Three-finger toxin MS3 from Micrurus surinamensis (Surinam coral snake).